A 181-amino-acid chain; its full sequence is LEM domain-containing protein 1 (181 aa).

In terms of domain architecture, LEM spans 1-45 (MVDVKCLSDCKLQNQLEKLGFSPGPILPSTRKLYEKKLVQLLVSP). The helical; Signal-anchor for type II membrane protein transmembrane segment at 152 to 172 (FPVGLKLAVLGIFIIVVFVYL) threads the bilayer.

In terms of tissue distribution, testis-specific. Isoform 6 is detected in 17 of 18 colon cancer tissues examined.

The protein localises to the membrane. In Homo sapiens (Human), this protein is LEM domain-containing protein 1 (LEMD1).